Reading from the N-terminus, the 587-residue chain is Sedolisin (587 aa).

Residues 1-32 (MKSSAAKQTVLCLNRYAVVALPLAIASFAAFG) form the signal peptide. Residues 33 to 215 (ASPASTLWAP…VGERSAAKTL (183 aa)) constitute a propeptide, removed in mature form. In terms of domain architecture, Peptidase S53 spans 219–583 (TAKGHNPTEF…AKLSAYIRSN (365 aa)). Residues 276–295 (TIQTGSSNGDYSDDQQGQGE) are disordered. Catalysis depends on charge relay system residues E295 and D299. C352 and C391 are oxidised to a cystine. S502 functions as the Charge relay system in the catalytic mechanism. D543, V544, G559, G561, and D563 together coordinate Ca(2+). Residues 586 to 587 (GH) constitute a propeptide, removed in mature form.

Ca(2+) is required as a cofactor. Autocatalytically processed.

It localises to the periplasm. The catalysed reaction is Hydrolysis of the B chain of insulin at 13-Glu-|-Ala-14, 15-Leu-|-Tyr-16 and 25-Phe-|-Tyr-26 and angiotensin I at 4-Tyr-|-Ile-5. A good synthetic substrate is Lys-Pro-Ile-Glu-Phe-|-Phe(NO2)-Arg-Leu.. With respect to regulation, inhibited by 1,2-epoxy-3-(p-nitrophenoxy)propane (EPNP), but not by carboxyl proteinase inhibitors, such as pepstatin, pepstatin Ac (S-PI) and diazoacetyl-DL-norleucine methyl ester (DAN). Inhibited by tyrostatin, pseudo-tyrostatin, AcIPF, AcIAF, chymostatin and pseudo-iodotyrostatin. Its function is as follows. Pepstatin-insensitive serine-carboxyl proteinase. In vitro can hydrolyze various synthetic peptides. Also shows activity on acid-denatured hemoglobin and on casein. The protein is Sedolisin (pcp) of Pseudomonas sp. (strain 101) (Achromobacter parvulus T1).